The sequence spans 401 residues: Chalcone synthase 2 (401 aa).

C168 is a catalytic residue.

The protein belongs to the thiolase-like superfamily. Chalcone/stilbene synthases family.

It catalyses the reaction (E)-4-coumaroyl-CoA + 3 malonyl-CoA + 3 H(+) = 2',4,4',6'-tetrahydroxychalcone + 3 CO2 + 4 CoA. Its pathway is secondary metabolite biosynthesis; flavonoid biosynthesis. In terms of biological role, the primary product of this enzyme is 4,2',4',6'-tetrahydroxychalcone (also termed naringenin-chalcone or chalcone) which can under specific conditions spontaneously isomerize into naringenin. This chain is Chalcone synthase 2 (CHS2), found in Sorghum bicolor (Sorghum).